A 211-amino-acid chain; its full sequence is Ribosome maturation factor RimM (211 aa).

Positions 111–182 constitute a PRC barrel domain; the sequence is PDAWYDHQLV…TLVVTPPLGL (72 aa). Residues 184-211 form a disordered region; that stretch reads EEIPDETPTAEPTPAEAAEPAPEGDDAR. Over residues 189–204 the composition is skewed to low complexity; sequence ETPTAEPTPAEAAEPA.

The protein belongs to the RimM family. Binds ribosomal protein uS19.

The protein resides in the cytoplasm. In terms of biological role, an accessory protein needed during the final step in the assembly of 30S ribosomal subunit, possibly for assembly of the head region. Essential for efficient processing of 16S rRNA. May be needed both before and after RbfA during the maturation of 16S rRNA. It has affinity for free ribosomal 30S subunits but not for 70S ribosomes. This chain is Ribosome maturation factor RimM, found in Clavibacter michiganensis subsp. michiganensis (strain NCPPB 382).